A 398-amino-acid polypeptide reads, in one-letter code: ORC1-type DNA replication protein 1 (398 aa).

ATP is bound by residues 67–71, Y208, and R220; that span reads TGKTA.

Belongs to the CDC6/cdc18 family.

Involved in regulation of DNA replication. This chain is ORC1-type DNA replication protein 1 (cdc6-1), found in Sulfurisphaera tokodaii (strain DSM 16993 / JCM 10545 / NBRC 100140 / 7) (Sulfolobus tokodaii).